Reading from the N-terminus, the 212-residue chain is Cyclin-dependent kinase 2-interacting protein (212 aa).

M1 is modified (N-acetylmethionine). S69 and S73 each carry phosphoserine. A coiled-coil region spans residues 74–106 (NDCAEKEHPEYSRELETLCEELQATLEGLTKIQ).

This sequence belongs to the CINP family. Homodimer. Part of the 55LCC heterohexameric ATPase complex composed at least of AIRIM, AFG2A, AFG2B and CINP. Interacts with AIRIM. Interacts with CDK2 and CDC7. Interacts with the components of the replication complex, MCM2, MCM3, MCM4, MCM5, MCM6, MCM7 and with ORC2-containing complexes. Interacts with ATRIP. Interacts with CEP152. Associates with pre-60S ribosomal particles. Post-translationally, phosphorylated by CDC7 but not by CDK2.

Its subcellular location is the nucleus. Its function is as follows. Component of the DNA replication complex, which interacts with two kinases, CDK2 and CDC7, thereby providing a functional and physical link between CDK2 and CDC7 during firing of the origins of replication. Regulates ATR-mediated checkpoint signaling in response to DNA damage. Part of the 55LCC heterohexameric ATPase complex which is chromatin-associated and promotes replisome proteostasis to maintain replication fork progression and genome stability. Required for replication fork progression, sister chromatid cohesion, and chromosome stability. The ATPase activity is specifically enhanced by replication fork DNA and is coupled to cysteine protease-dependent cleavage of replisome substrates in response to replication fork damage. Uses ATPase activity to process replisome substrates in S-phase, facilitating their proteolytic turnover from chromatin to ensure DNA replication and mitotic fidelity. As part of 55LCC complex, also involved in the cytoplasmic maturation steps of pre-60S ribosomal particles by promoting the release of shuttling protein RSL24D1/RLP24 from the pre-ribosomal particles. The sequence is that of Cyclin-dependent kinase 2-interacting protein (CINP) from Bos taurus (Bovine).